Consider the following 386-residue polypeptide: MNIHEYQAKEILRKYGVPTSTGLVVTQTEKINETIDKLNTEVYVVKAQIHAGGRGKAGGVKVVKSKEEAKKVAHDMFGINLVTHQTGPQGQKVNRLYIESGCDILKEYYFSIVFDRSASCITFIASTEGGVDIEEVAEKTPEKIIKFSVDPATGLQDFHMRGIAYELGFKDNQAKQMKEIVKSVYNAFIETDAAQIEINPLIVNSDGHLLALDAKITFDDNGLLRHPNITAMRDHDEEDPLETRAANAGLSYVKMDGNIGCMVNGAGLAMATMDIIKLYGASPANFLDVGGGADRERVKEALKIILSDKEVQGILVNIFGGIMRCDIIAEGIIAAAKDIGIKVPLVVRLAGTNVEKGEEILSNSGLEIIPAHDLADAANKIVEAIR.

In terms of domain architecture, ATP-grasp spans 9–244; it reads KEILRKYGVP…HDEEDPLETR (236 aa). Residues lysine 46, 53 to 55, glutamate 99, cysteine 102, and glutamate 107 each bind ATP; that span reads GRG. The Mg(2+) site is built by asparagine 199 and aspartate 213. Substrate-binding positions include asparagine 264 and 321–323; that span reads GIM.

Belongs to the succinate/malate CoA ligase beta subunit family. As to quaternary structure, heterotetramer of two alpha and two beta subunits. Mg(2+) is required as a cofactor.

It carries out the reaction succinate + ATP + CoA = succinyl-CoA + ADP + phosphate. The catalysed reaction is GTP + succinate + CoA = succinyl-CoA + GDP + phosphate. It participates in carbohydrate metabolism; tricarboxylic acid cycle; succinate from succinyl-CoA (ligase route): step 1/1. Its function is as follows. Succinyl-CoA synthetase functions in the citric acid cycle (TCA), coupling the hydrolysis of succinyl-CoA to the synthesis of either ATP or GTP and thus represents the only step of substrate-level phosphorylation in the TCA. The beta subunit provides nucleotide specificity of the enzyme and binds the substrate succinate, while the binding sites for coenzyme A and phosphate are found in the alpha subunit. The polypeptide is Succinate--CoA ligase [ADP-forming] subunit beta (Rickettsia peacockii (strain Rustic)).